The sequence spans 331 residues: 4-hydroxythreonine-4-phosphate dehydrogenase (331 aa).

Positions 137 and 138 each coordinate substrate. 3 residues coordinate a divalent metal cation: His167, His212, and His267. Residues Lys275, Asn284, and Arg293 each contribute to the substrate site.

Belongs to the PdxA family. As to quaternary structure, homodimer. Zn(2+) serves as cofactor. Requires Mg(2+) as cofactor. It depends on Co(2+) as a cofactor.

The protein localises to the cytoplasm. The enzyme catalyses 4-(phosphooxy)-L-threonine + NAD(+) = 3-amino-2-oxopropyl phosphate + CO2 + NADH. The protein operates within cofactor biosynthesis; pyridoxine 5'-phosphate biosynthesis; pyridoxine 5'-phosphate from D-erythrose 4-phosphate: step 4/5. Its function is as follows. Catalyzes the NAD(P)-dependent oxidation of 4-(phosphooxy)-L-threonine (HTP) into 2-amino-3-oxo-4-(phosphooxy)butyric acid which spontaneously decarboxylates to form 3-amino-2-oxopropyl phosphate (AHAP). The sequence is that of 4-hydroxythreonine-4-phosphate dehydrogenase from Yersinia pseudotuberculosis serotype I (strain IP32953).